A 241-amino-acid chain; its full sequence is Pyridoxine 5'-phosphate synthase (241 aa).

N7 provides a ligand contact to 3-amino-2-oxopropyl phosphate. 9–10 (DH) serves as a coordination point for 1-deoxy-D-xylulose 5-phosphate. R18 is a binding site for 3-amino-2-oxopropyl phosphate. The active-site Proton acceptor is the H43. 1-deoxy-D-xylulose 5-phosphate-binding residues include R45 and H50. E70 serves as the catalytic Proton acceptor. T100 contributes to the 1-deoxy-D-xylulose 5-phosphate binding site. H191 acts as the Proton donor in catalysis. 3-amino-2-oxopropyl phosphate contacts are provided by residues G192 and 213-214 (GH).

It belongs to the PNP synthase family. In terms of assembly, homooctamer; tetramer of dimers.

Its subcellular location is the cytoplasm. It carries out the reaction 3-amino-2-oxopropyl phosphate + 1-deoxy-D-xylulose 5-phosphate = pyridoxine 5'-phosphate + phosphate + 2 H2O + H(+). Its pathway is cofactor biosynthesis; pyridoxine 5'-phosphate biosynthesis; pyridoxine 5'-phosphate from D-erythrose 4-phosphate: step 5/5. Catalyzes the complicated ring closure reaction between the two acyclic compounds 1-deoxy-D-xylulose-5-phosphate (DXP) and 3-amino-2-oxopropyl phosphate (1-amino-acetone-3-phosphate or AAP) to form pyridoxine 5'-phosphate (PNP) and inorganic phosphate. The polypeptide is Pyridoxine 5'-phosphate synthase (Acidithiobacillus ferrooxidans (strain ATCC 23270 / DSM 14882 / CIP 104768 / NCIMB 8455) (Ferrobacillus ferrooxidans (strain ATCC 23270))).